Reading from the N-terminus, the 202-residue chain is Ribonuclease HII (202 aa).

Positions 1 to 195 (MIVAGVDEVG…PELKGGSPAG (195 aa)) constitute an RNase H type-2 domain. Positions 7, 8, and 103 each coordinate a divalent metal cation.

This sequence belongs to the RNase HII family. Mn(2+) is required as a cofactor. Mg(2+) serves as cofactor.

The protein resides in the cytoplasm. It carries out the reaction Endonucleolytic cleavage to 5'-phosphomonoester.. Its function is as follows. Endonuclease that specifically degrades the RNA of RNA-DNA hybrids. The chain is Ribonuclease HII from Synechococcus sp. (strain RCC307).